Reading from the N-terminus, the 317-residue chain is Porphobilinogen deaminase (317 aa).

The residue at position 245 (cysteine 245) is an S-(dipyrrolylmethanemethyl)cysteine.

Belongs to the HMBS family. As to quaternary structure, monomer. Dipyrromethane serves as cofactor.

It catalyses the reaction 4 porphobilinogen + H2O = hydroxymethylbilane + 4 NH4(+). It functions in the pathway porphyrin-containing compound metabolism; protoporphyrin-IX biosynthesis; coproporphyrinogen-III from 5-aminolevulinate: step 2/4. Its pathway is porphyrin-containing compound metabolism; chlorophyll biosynthesis. Functionally, tetrapolymerization of the monopyrrole PBG into the hydroxymethylbilane pre-uroporphyrinogen in several discrete steps. The polypeptide is Porphobilinogen deaminase (Prochlorococcus marinus (strain MIT 9313)).